The chain runs to 112 residues: Putative UPF0320 protein YEL074W (112 aa).

Positions 93–112 (EKSPSKSPKHKNILPFNFTK) are disordered.

The protein belongs to the UPF0320 family.

This Saccharomyces cerevisiae (strain ATCC 204508 / S288c) (Baker's yeast) protein is Putative UPF0320 protein YEL074W.